Here is a 378-residue protein sequence, read N- to C-terminus: Glutamate 5-kinase (378 aa).

An ATP-binding site is contributed by Lys-19. Substrate is bound by residues Ser-59, Asp-146, and Asn-158. Residues 178–179 and 220–226 contribute to the ATP site; these read TD and TGGMATK. In terms of domain architecture, PUA spans 285-363; it reads QGQIQVDAGA…GEIGEILGYK (79 aa).

It belongs to the glutamate 5-kinase family.

It is found in the cytoplasm. It catalyses the reaction L-glutamate + ATP = L-glutamyl 5-phosphate + ADP. It functions in the pathway amino-acid biosynthesis; L-proline biosynthesis; L-glutamate 5-semialdehyde from L-glutamate: step 1/2. Catalyzes the transfer of a phosphate group to glutamate to form L-glutamate 5-phosphate. This is Glutamate 5-kinase from Moorella thermoacetica (strain ATCC 39073 / JCM 9320).